The chain runs to 347 residues: S-adenosylmethionine decarboxylase proenzyme (347 aa).

Active-site residues include E10 and E13. The Schiff-base intermediate with substrate; via pyruvic acid role is filled by S66. Pyruvic acid (Ser); by autocatalysis is present on S66. The active-site Proton donor; for catalytic activity is C80. Active-site proton acceptor; for processing activity residues include S237 and H251.

This sequence belongs to the eukaryotic AdoMetDC family. The cofactor is pyruvate. Post-translationally, is synthesized initially as an inactive proenzyme. Formation of the active enzyme involves a self-maturation process in which the active site pyruvoyl group is generated from an internal serine residue via an autocatalytic post-translational modification. Two non-identical subunits are generated from the proenzyme in this reaction, and the pyruvate is formed at the N-terminus of the alpha chain, which is derived from the carboxyl end of the proenzyme. The post-translation cleavage follows an unusual pathway, termed non-hydrolytic serinolysis, in which the side chain hydroxyl group of the serine supplies its oxygen atom to form the C-terminus of the beta chain, while the remainder of the serine residue undergoes an oxidative deamination to produce ammonia and the pyruvoyl group blocking the N-terminus of the alpha chain.

The enzyme catalyses S-adenosyl-L-methionine + H(+) = S-adenosyl 3-(methylsulfanyl)propylamine + CO2. It functions in the pathway amine and polyamine biosynthesis; S-adenosylmethioninamine biosynthesis; S-adenosylmethioninamine from S-adenosyl-L-methionine: step 1/1. The chain is S-adenosylmethionine decarboxylase proenzyme (SamDC) from Drosophila melanogaster (Fruit fly).